The chain runs to 305 residues: 2-methoxy-6-polyprenyl-1,4-benzoquinol methylase, mitochondrial (305 aa).

The N-terminal 34 residues, 1–34, are a transit peptide targeting the mitochondrion; sequence MSRLRAPVAKFLADGLKGIRSTALAGSRLSNCRY. S-adenosyl-L-methionine is bound by residues Thr117, Asp143, and 173–174; that span reads NA.

It belongs to the class I-like SAM-binding methyltransferase superfamily. MenG/UbiE family. As to quaternary structure, component of a multi-subunit COQ enzyme complex, composed of at least COQ3, COQ4, COQ5, COQ6, COQ7 and COQ9.

The protein localises to the mitochondrion inner membrane. The enzyme catalyses 2-methoxy-6-(all-trans-decaprenyl)benzene-1,4-diol + S-adenosyl-L-methionine = 5-methoxy-2-methyl-3-(all-trans-decaprenyl)benzene-1,4-diol + S-adenosyl-L-homocysteine + H(+). It participates in cofactor biosynthesis; ubiquinone biosynthesis. In terms of biological role, methyltransferase required for the conversion of 2-decaprenyl-6-methoxy-1,4-benzoquinol (DDMQH2) to 2-decaprenyl-3-methyl-6-methoxy-1,4-benzoquinol (DMQH2). This chain is 2-methoxy-6-polyprenyl-1,4-benzoquinol methylase, mitochondrial, found in Schizosaccharomyces pombe (strain 972 / ATCC 24843) (Fission yeast).